We begin with the raw amino-acid sequence, 167 residues long: NAD(P)H-quinone oxidoreductase subunit I, chloroplastic (167 aa).

4Fe-4S ferredoxin-type domains follow at residues 55–84 (GRIH…VDWK) and 95–124 (LNYS…MTEE). C64, C67, C70, C74, C104, C107, C110, and C114 together coordinate [4Fe-4S] cluster.

This sequence belongs to the complex I 23 kDa subunit family. As to quaternary structure, NDH is composed of at least 16 different subunits, 5 of which are encoded in the nucleus. Requires [4Fe-4S] cluster as cofactor.

It localises to the plastid. It is found in the chloroplast thylakoid membrane. The catalysed reaction is a plastoquinone + NADH + (n+1) H(+)(in) = a plastoquinol + NAD(+) + n H(+)(out). It catalyses the reaction a plastoquinone + NADPH + (n+1) H(+)(in) = a plastoquinol + NADP(+) + n H(+)(out). In terms of biological role, NDH shuttles electrons from NAD(P)H:plastoquinone, via FMN and iron-sulfur (Fe-S) centers, to quinones in the photosynthetic chain and possibly in a chloroplast respiratory chain. The immediate electron acceptor for the enzyme in this species is believed to be plastoquinone. Couples the redox reaction to proton translocation, and thus conserves the redox energy in a proton gradient. This Solanum tuberosum (Potato) protein is NAD(P)H-quinone oxidoreductase subunit I, chloroplastic.